A 226-amino-acid polypeptide reads, in one-letter code: Enolase-phosphatase E1 (226 aa).

This sequence belongs to the HAD-like hydrolase superfamily. MasA/MtnC family. In terms of assembly, monomer. Mg(2+) is required as a cofactor.

The enzyme catalyses 5-methylsulfanyl-2,3-dioxopentyl phosphate + H2O = 1,2-dihydroxy-5-(methylsulfanyl)pent-1-en-3-one + phosphate. It participates in amino-acid biosynthesis; L-methionine biosynthesis via salvage pathway; L-methionine from S-methyl-5-thio-alpha-D-ribose 1-phosphate: step 3/6. It functions in the pathway amino-acid biosynthesis; L-methionine biosynthesis via salvage pathway; L-methionine from S-methyl-5-thio-alpha-D-ribose 1-phosphate: step 4/6. Its function is as follows. Bifunctional enzyme that catalyzes the enolization of 2,3-diketo-5-methylthiopentyl-1-phosphate (DK-MTP-1-P) into the intermediate 2-hydroxy-3-keto-5-methylthiopentenyl-1-phosphate (HK-MTPenyl-1-P), which is then dephosphorylated to form the acireductone 1,2-dihydroxy-3-keto-5-methylthiopentene (DHK-MTPene). The chain is Enolase-phosphatase E1 from Shewanella baltica (strain OS195).